We begin with the raw amino-acid sequence, 163 residues long: Photosystem II extrinsic protein V (163 aa).

Positions 1-26 are cleaved as a signal peptide; that stretch reads MLRKLILITVATVFFACQLLVNPVSA. Cys63, Cys66, His67, and His118 together coordinate heme c.

It belongs to the cytochrome c family. PsbV subfamily. PSII is composed of 1 copy each of membrane proteins PsbA, PsbB, PsbC, PsbD, PsbE, PsbF, PsbH, PsbI, PsbJ, PsbK, PsbL, PsbM, PsbT, PsbX, PsbY, PsbZ, Psb30/Ycf12, peripheral proteins PsbO, CyanoQ (PsbQ), PsbU, PsbV and a large number of cofactors. It forms dimeric complexes. Heme c is required as a cofactor.

It is found in the cellular thylakoid membrane. Its function is as follows. One of the extrinsic, lumenal subunits of photosystem II (PSII). PSII is a light-driven water plastoquinone oxidoreductase, using light energy to abstract electrons from H(2)O, generating a proton gradient subsequently used for ATP formation. The extrinsic proteins stabilize the structure of photosystem II oxygen-evolving complex (OEC), the ion environment of oxygen evolution and protect the OEC against heat-induced inactivation. Low-potential cytochrome c that plays a role in the OEC of PSII. The polypeptide is Photosystem II extrinsic protein V (Aphanothece halophytica).